A 222-amino-acid polypeptide reads, in one-letter code: tRNA (guanine-N(1)-)-methyltransferase (222 aa).

S-adenosyl-L-methionine-binding positions include Gly-112 and 132 to 137 (IGDYVL).

The protein belongs to the RNA methyltransferase TrmD family. Homodimer.

It is found in the cytoplasm. It carries out the reaction guanosine(37) in tRNA + S-adenosyl-L-methionine = N(1)-methylguanosine(37) in tRNA + S-adenosyl-L-homocysteine + H(+). Specifically methylates guanosine-37 in various tRNAs. The chain is tRNA (guanine-N(1)-)-methyltransferase from Azobacteroides pseudotrichonymphae genomovar. CFP2.